The chain runs to 213 residues: Urease accessory protein UreE (213 aa).

Residues 170–213 form a disordered region; it reads EHHGRSHSHSHSHSHDHDHDHDHDHDHDHQHGPSCSHGHGHGHR. The segment covering 182-200 has biased composition (basic and acidic residues); that stretch reads HSHDHDHDHDHDHDHDHQH.

This sequence belongs to the UreE family.

It is found in the cytoplasm. Functionally, involved in urease metallocenter assembly. Binds nickel. Probably functions as a nickel donor during metallocenter assembly. This Burkholderia thailandensis (strain ATCC 700388 / DSM 13276 / CCUG 48851 / CIP 106301 / E264) protein is Urease accessory protein UreE.